The following is a 306-amino-acid chain: MRVLFAGTPAVAVPSLDALVKAGFDVVAVLTRPDAPVGRKRVLTPSPVAARAMELGIDVIRAARVDADTTAGIAKYAPDVAAIVAYGGIVPKAALGVPTHGWVNLHFSLLPAWRGAAPVQRSIIAGDDVTGAATFQLEEGLDTGPVFGTLTETVRPEDTAGDLLERLSISGAVLLSQTLSAIDAGQAAPQPQIGEVSHAPKLTLDDGRLDWQQPALALNRRARGVTPEPGAWTTLDGQRVKLEPVALRPEVKDLPPGSIRVDGKSVLVGTGSHAVELGRVQPAGKKMMPPADWARGLATPERVVFE.

108–111 (SLLP) contacts (6S)-5,6,7,8-tetrahydrofolate.

The protein belongs to the Fmt family.

It catalyses the reaction L-methionyl-tRNA(fMet) + (6R)-10-formyltetrahydrofolate = N-formyl-L-methionyl-tRNA(fMet) + (6S)-5,6,7,8-tetrahydrofolate + H(+). Attaches a formyl group to the free amino group of methionyl-tRNA(fMet). The formyl group appears to play a dual role in the initiator identity of N-formylmethionyl-tRNA by promoting its recognition by IF2 and preventing the misappropriation of this tRNA by the elongation apparatus. This chain is Methionyl-tRNA formyltransferase, found in Paenarthrobacter aurescens (strain TC1).